The following is a 313-amino-acid chain: 4-diphosphocytidyl-2-C-methyl-D-erythritol kinase (313 aa).

Lysine 27 is an active-site residue. Proline 110–serine 120 serves as a coordination point for ATP. The active site involves aspartate 152.

It belongs to the GHMP kinase family. IspE subfamily.

It catalyses the reaction 4-CDP-2-C-methyl-D-erythritol + ATP = 4-CDP-2-C-methyl-D-erythritol 2-phosphate + ADP + H(+). It functions in the pathway isoprenoid biosynthesis; isopentenyl diphosphate biosynthesis via DXP pathway; isopentenyl diphosphate from 1-deoxy-D-xylulose 5-phosphate: step 3/6. Its function is as follows. Catalyzes the phosphorylation of the position 2 hydroxy group of 4-diphosphocytidyl-2C-methyl-D-erythritol. The polypeptide is 4-diphosphocytidyl-2-C-methyl-D-erythritol kinase (Histophilus somni (strain 129Pt) (Haemophilus somnus)).